The chain runs to 152 residues: Transcriptional regulator MraZ (152 aa).

SpoVT-AbrB domains are found at residues 5-51 (VNSI…PLPE) and 80-123 (AAEC…DEVL).

Belongs to the MraZ family. In terms of assembly, forms oligomers.

The protein localises to the cytoplasm. Its subcellular location is the nucleoid. The polypeptide is Transcriptional regulator MraZ (Methylococcus capsulatus (strain ATCC 33009 / NCIMB 11132 / Bath)).